A 140-amino-acid chain; its full sequence is Small ribosomal subunit protein uS12 (140 aa).

Asp102 carries the 3-methylthioaspartic acid modification.

This sequence belongs to the universal ribosomal protein uS12 family. In terms of assembly, part of the 30S ribosomal subunit. Contacts proteins S8 and S17. May interact with IF1 in the 30S initiation complex.

In terms of biological role, with S4 and S5 plays an important role in translational accuracy. Interacts with and stabilizes bases of the 16S rRNA that are involved in tRNA selection in the A site and with the mRNA backbone. Located at the interface of the 30S and 50S subunits, it traverses the body of the 30S subunit contacting proteins on the other side and probably holding the rRNA structure together. The combined cluster of proteins S8, S12 and S17 appears to hold together the shoulder and platform of the 30S subunit. The sequence is that of Small ribosomal subunit protein uS12 from Geobacillus stearothermophilus (Bacillus stearothermophilus).